The following is a 132-amino-acid chain: Small ribosomal subunit protein uS8 (132 aa).

The protein belongs to the universal ribosomal protein uS8 family. In terms of assembly, part of the 30S ribosomal subunit. Contacts proteins S5 and S12.

One of the primary rRNA binding proteins, it binds directly to 16S rRNA central domain where it helps coordinate assembly of the platform of the 30S subunit. The polypeptide is Small ribosomal subunit protein uS8 (Rhizobium rhizogenes (strain K84 / ATCC BAA-868) (Agrobacterium radiobacter)).